Consider the following 1036-residue polypeptide: MFAQLDTKTVYSFMDSLIDLNHYFERAKQFGYHTIGIMDKDNLYGAYHFIKGCQKNGLQPVLGLEVEILYQERQVLLNLIAQNTQGYHQLLKISTAKMSGKLHMDYLCQHLEGIAVIIPSKGWSDTLVVPFDYYIGVDQYTDLSHMDSKRQLIPLRTVRYFAQDDMETLHMLHAIRDNLSLAETPVVESDQELTDCQQLTTFYQTHCPQALQNLEDLVSGIYYDFDTNLKLPHFNRDKSAKQELQELTEAGLKEKGLWKEPYQSRLLHELVIISDMGFDDYFLIVWDLLRFGRSKGYYMGMGRGSAAGSLVAYALNITGIDPVQHDLLFERFLNKERYSMPDIDIDLPDIYRSEFLRYVRNRYGSDHSAQIVTFSTFGPKQAIRDVFKRFGVPEYELTNLTKKIGFKDSLATVYEKSISFRQVINSRTEFQKAFAIAKRIEGNPRQTSIHAAGIVMSDDTLTNHIPLKSGDDMMITQYDAHAIEANGLLKMDFLGLRNLTFVQKMQEKVAKDYGCQIDIAAIDLEDPQTLALFAKGDTKGIFQFEQNGAINLLKRIKPQRFEEIVATTSLNRPGASDYTTNFIKRREGQEKIDLIDPVIAPILEPTYGIMLYQEQVMQIAQIYAGFTLGKADLLRRAMSKKNLQEMQKMEEDFIASAKHLGRAEETARGLFKRMEKFAGYGFNRSHAFAYSALAFQLAYFKAHYPAVFYDIMMNYSSSDYITDALESDFQVAQVTINSIPYTDKIEASKIYMGLKNIKGLPRDFAYWIIEQRPFNSVEDFLTRTPEKYQKKVFLEPLIKIGLFDCFEPNRKKILDNLDGLLVFVNELGSLFSDSSFSWVDAKDYSATEKYSLEQEIVGVGMSKHPLIDIAEKSTQTFTPISQLVKESEAVVLIQIDSIRIIRTKTSGQQMAFLSVNDTKKKLDVTLFPQEYAIYKDQLIEGEFYYLKGRIKERDHRLQMVCQQVQMAISQKYWLLVENHQFDSQISEILGAFPGTTPVVIHYQKNKETIALTKIQVHVTENLKEKLRPFVLKTVFR.

Belongs to the DNA polymerase type-C family. DnaE subfamily. DNA polymerase III contains a core (composed of alpha, epsilon and theta chains) that associates with a tau subunit. This core dimerizes to form the PolIII' complex. PolIII' associates with the gamma complex (composed of gamma, delta, delta', psi and chi chains) and with the beta chain to form the complete DNA polymerase III complex.

It localises to the cytoplasm. The catalysed reaction is DNA(n) + a 2'-deoxyribonucleoside 5'-triphosphate = DNA(n+1) + diphosphate. Its function is as follows. DNA polymerase III is a complex, multichain enzyme responsible for most of the replicative synthesis in bacteria. This DNA polymerase also exhibits 3' to 5' exonuclease activity. The alpha chain is the DNA polymerase. The sequence is that of DNA polymerase III subunit alpha (dnaE) from Streptococcus pyogenes serotype M3 (strain ATCC BAA-595 / MGAS315).